We begin with the raw amino-acid sequence, 803 residues long: Nuclear factor of activated T-cells, cytoplasmic 1 (803 aa).

Residues Pro101–Thr106 are calcineurin-binding. Residues Leu109–Glu199 are transactivation domain A (TAD-A). Positions Pro181 to Thr195 are enriched in polar residues. A disordered region spans residues Pro181 to Asp279. Tandem repeats lie at residues Ser184–Glu200 and Ser214–Glu230. The interval Ser184–Asp279 is 3 X SP repeats. 2 positions are modified to phosphoserine: Ser214 and Ser218. The span at Ser214–Ser231 shows a compositional bias: low complexity. The residue at position 226 (Ser226) is a Phosphoserine; by PKA. Residues Lys246 to Lys248 carry the Nuclear localization signal motif. The stretch at Ser263–Asp279 is repeat 3. At Ser275 the chain carries Phosphoserine; by PKA. Positions Ser291–Thr302 match the Nuclear export signal motif. Residues Pro389–Ala571 form the RHD domain. Residues Arg418–Gly425 mediate DNA binding. A Nuclear localization signal motif is present at residues Lys661 to Lys663. The disordered stretch occupies residues Leu723–Gly803. Residues Ser778–Leu792 are compositionally biased toward pro residues. Positions Leu793 to Gly803 are enriched in low complexity.

Member of the multicomponent NFATC transcription complex that consists of at least two components, a pre-existing cytoplasmic component NFATC2 and an inducible nuclear component NFATC1. Other members such as NFATC4, NFATC3 or members of the activating protein-1 family, MAF, GATA4 and Cbp/p300 can also bind the complex. NFATC proteins bind to DNA as monomers. Interacts with HOMER2 and HOMER3; this interaction may compete with calcineurin/PPP3CA-binding and hence prevent NFATC1 dephosphorylation and activation. Interacts with TLE6/GRG6. In terms of processing, phosphorylated by NFATC-kinase and GSK3B; phosphorylation induces NFATC1 nuclear exit and dephosphorylation by calcineurin promotes nuclear import. Phosphorylation by PKA and DYRK2 negatively modulates nuclear accumulation, and promotes subsequent phosphorylation by GSK3B or casein kinase 1.

The protein localises to the cytoplasm. The protein resides in the nucleus. Its function is as follows. Plays a role in the inducible expression of cytokine genes in T-cells, especially in the induction of the IL-2 or IL-4 gene transcription. Also controls gene expression in embryonic cardiac cells. Could regulate not only the activation and proliferation but also the differentiation and programmed death of T-lymphocytes as well as lymphoid and non-lymphoid cells. Required for osteoclastogenesis and regulates many genes important for osteoclast differentiation and function. This Bos taurus (Bovine) protein is Nuclear factor of activated T-cells, cytoplasmic 1.